We begin with the raw amino-acid sequence, 60 residues long: MNAKYDTDQGVGRMLFLGTIGLAVVVGGLMAYGYYYDGKTPSSGTSFHTASPSFSSRYRY.

The helical transmembrane segment at 14–34 (MLFLGTIGLAVVVGGLMAYGY) threads the bilayer. The disordered stretch occupies residues 38 to 60 (GKTPSSGTSFHTASPSFSSRYRY). Positions 40–60 (TPSSGTSFHTASPSFSSRYRY) are enriched in polar residues.

The protein resides in the host membrane. This is an uncharacterized protein from Dryophytes versicolor (chameleon treefrog).